Reading from the N-terminus, the 291-residue chain is ATP synthase subunit a (291 aa).

The next 5 membrane-spanning stretches (helical) occupy residues 47–67 (FTNL…LVFV), 140–160 (HFLI…IVGF), 167–187 (FFSF…LVLL), 207–227 (MMAG…MLFL), and 230–250 (IFYF…TGLE).

It belongs to the ATPase A chain family. F-type ATPases have 2 components, CF(1) - the catalytic core - and CF(0) - the membrane proton channel. CF(1) has five subunits: alpha(3), beta(3), gamma(1), delta(1), epsilon(1). CF(0) has three main subunits: a, b and c.

The protein localises to the mitochondrion inner membrane. Mitochondrial membrane ATP synthase (F(1)F(0) ATP synthase or Complex V) produces ATP from ADP in the presence of a proton gradient across the membrane which is generated by electron transport complexes of the respiratory chain. F-type ATPases consist of two structural domains, F(1) - containing the extramembraneous catalytic core and F(0) - containing the membrane proton channel, linked together by a central stalk and a peripheral stalk. During catalysis, ATP synthesis in the catalytic domain of F(1) is coupled via a rotary mechanism of the central stalk subunits to proton translocation. Key component of the proton channel; it may play a direct role in the translocation of protons across the membrane. This Zea mays (Maize) protein is ATP synthase subunit a (ATP6).